The chain runs to 536 residues: MFERTSKPAFVENICVESMRCPKSAVTMRNEELLFSNGTTNKMNGALDHSDQPDPDAIKMFVGQIPRSWSEKELKDLFEPYGAVYQINVLRDRSQNPPQSKGCCFVTFYTRKAALEAQNALHNIKTLPGMHHPIQMKPADSEKSNAVEDRKLFIGMVSKKCNENDIRVMFSPFGQIEECRILRGPDGLSRGCAFVTFSTRAMAQNAIKAMHQSQTMEGCSSPIVVKFADTQKDKEQRRLQQQLAQQMQQLNTATWGNLTGLGGLTPQYLALLQQATTPSNLGAFSGIQQMAGMNALQLQNLATLAAAAAAAQTSATTTNVNPLSTTASALGALTSPVAASTANSSAGAAMNSLTSLGTLQGLAGATVGLNNINALAGTVNIAQMLSGMAALNGGLGATGLTNGTAGTMDALTQAYSGIQQYAAAALPTLYSQSLLQQQSAAGSQKEGPEGANLFIYHLPQEFGDQDILQMFMPFGNVISAKVFIDKQTNLSKCFGFVSYDNPVSAQAAIQAMNGFQIGMKRLKVQLKRSKNDSKPY.

RRM domains lie at 58–141 (IKMF…PADS), 150–230 (RKLF…FADT), and 451–529 (ANLF…LKRS).

The protein belongs to the CELF/BRUNOL family.

It localises to the nucleus. It is found in the cytoplasm. Its function is as follows. RNA-binding protein implicated in the regulation of several post-transcriptional events. May be involved in pre-mRNA alternative splicing, mRNA translation repression and stability. This is CUGBP Elav-like family member 2 (celf2) from Xenopus laevis (African clawed frog).